A 210-amino-acid chain; its full sequence is MIDFKMTKEGLILLIRDYQNLEEVLNEITSRVTQMGGFFAKGDRISLMIENHTKHSQDIPKIVSRLRELGLEVSQILVGSTIEGKENDVRVESRTTVESTGKVIKRNIRSGQTVVHSGDVIVFGNVNKGAEILAGGSVVVFGKAQGNIRAGLNEGEQAVVAALDLQTSLIQIAGFITHSKGEENVPSIAHVKGNRIVIEPFDRVDFERSE.

Belongs to the MinC family. In terms of assembly, interacts with MinD and FtsZ.

Its function is as follows. Cell division inhibitor that blocks the formation of polar Z ring septums. Rapidly oscillates between the poles of the cell to destabilize FtsZ filaments that have formed before they mature into polar Z rings. Prevents FtsZ polymerization. The sequence is that of Probable septum site-determining protein MinC from Thermotoga neapolitana (strain ATCC 49049 / DSM 4359 / NBRC 107923 / NS-E).